The primary structure comprises 194 residues: ATP-dependent Clp protease proteolytic subunit (194 aa).

S98 acts as the Nucleophile in catalysis. H123 is an active-site residue.

The protein belongs to the peptidase S14 family. Fourteen ClpP subunits assemble into 2 heptameric rings which stack back to back to give a disk-like structure with a central cavity, resembling the structure of eukaryotic proteasomes.

It localises to the cytoplasm. It catalyses the reaction Hydrolysis of proteins to small peptides in the presence of ATP and magnesium. alpha-casein is the usual test substrate. In the absence of ATP, only oligopeptides shorter than five residues are hydrolyzed (such as succinyl-Leu-Tyr-|-NHMec, and Leu-Tyr-Leu-|-Tyr-Trp, in which cleavage of the -Tyr-|-Leu- and -Tyr-|-Trp bonds also occurs).. Its function is as follows. Cleaves peptides in various proteins in a process that requires ATP hydrolysis. Has a chymotrypsin-like activity. Plays a major role in the degradation of misfolded proteins. This is ATP-dependent Clp protease proteolytic subunit from Sodalis glossinidius (strain morsitans).